The sequence spans 109 residues: UPF0122 protein Cbei_1174 (109 aa).

It belongs to the UPF0122 family.

Functionally, might take part in the signal recognition particle (SRP) pathway. This is inferred from the conservation of its genetic proximity to ftsY/ffh. May be a regulatory protein. This Clostridium beijerinckii (strain ATCC 51743 / NCIMB 8052) (Clostridium acetobutylicum) protein is UPF0122 protein Cbei_1174.